The chain runs to 156 residues: Large ribosomal subunit protein uL15 (156 aa).

The segment covering 1–13 (MKLNEIKDNEGAT) has biased composition (basic and acidic residues). A disordered region spans residues 1 to 39 (MKLNEIKDNEGATKNRKRLGRGIGSGSGKTAGRGVKGQK). Residues 21 to 35 (RGIGSGSGKTAGRGV) show a composition bias toward gly residues.

Belongs to the universal ribosomal protein uL15 family. Part of the 50S ribosomal subunit.

In terms of biological role, binds to the 23S rRNA. This is Large ribosomal subunit protein uL15 from Rhizobium meliloti (strain 1021) (Ensifer meliloti).